Consider the following 284-residue polypeptide: Undecaprenyl-diphosphatase (284 aa).

Transmembrane regions (helical) follow at residues 7-27 (IILG…TGHL), 44-64 (EMFD…LYFH), 90-110 (LWLK…PLND), 116-136 (FYHF…FIVI), 167-187 (VLSL…ALLI), 197-217 (FTFF…ILHF), 229-249 (FGVL…AIKF), and 259-279 (FTFF…YAAF).

This sequence belongs to the UppP family.

It is found in the cell membrane. The catalysed reaction is di-trans,octa-cis-undecaprenyl diphosphate + H2O = di-trans,octa-cis-undecaprenyl phosphate + phosphate + H(+). Catalyzes the dephosphorylation of undecaprenyl diphosphate (UPP). Confers resistance to bacitracin. The chain is Undecaprenyl-diphosphatase from Lactococcus lactis subsp. cremoris (strain MG1363).